A 236-amino-acid chain; its full sequence is tRNA1(Val) (adenine(37)-N6)-methyltransferase (236 aa).

This sequence belongs to the methyltransferase superfamily. tRNA (adenine-N(6)-)-methyltransferase family.

It is found in the cytoplasm. It catalyses the reaction adenosine(37) in tRNA1(Val) + S-adenosyl-L-methionine = N(6)-methyladenosine(37) in tRNA1(Val) + S-adenosyl-L-homocysteine + H(+). Its function is as follows. Specifically methylates the adenine in position 37 of tRNA(1)(Val) (anticodon cmo5UAC). This is tRNA1(Val) (adenine(37)-N6)-methyltransferase from Actinobacillus succinogenes (strain ATCC 55618 / DSM 22257 / CCUG 43843 / 130Z).